The primary structure comprises 341 residues: Uroporphyrinogen decarboxylase (341 aa).

Residues 26-30, Asp-75, Tyr-150, Ser-205, and His-318 each bind substrate; that span reads RQAGR.

This sequence belongs to the uroporphyrinogen decarboxylase family. In terms of assembly, homodimer.

It localises to the cytoplasm. It catalyses the reaction uroporphyrinogen III + 4 H(+) = coproporphyrinogen III + 4 CO2. The protein operates within porphyrin-containing compound metabolism; protoporphyrin-IX biosynthesis; coproporphyrinogen-III from 5-aminolevulinate: step 4/4. Catalyzes the decarboxylation of four acetate groups of uroporphyrinogen-III to yield coproporphyrinogen-III. The protein is Uroporphyrinogen decarboxylase of Thermus thermophilus (strain ATCC 27634 / DSM 579 / HB8).